Here is a 79-residue protein sequence, read N- to C-terminus: Protein NOI4 (79 aa).

A disordered region spans residues 31–68 (KARDEKKTGGKPGSPGKSSEGHVKSGGGDPSKPQPKKW). Ser-44 is modified (phosphoserine).

This sequence belongs to the RIN4 family. In terms of processing, proteolytic cleaved by P.syringae pv tomato AvrRpt2 after Gly-12; this cleavage is critical for subsequent proteasome-dependent elimination.

This chain is Protein NOI4, found in Arabidopsis thaliana (Mouse-ear cress).